The chain runs to 320 residues: ATP-dependent 6-phosphofructokinase (320 aa).

Gly12 provides a ligand contact to ATP. ADP-binding positions include 22–26 and 55–60; these read RGVVR and RYSVSD. ATP-binding positions include 73–74 and 103–106; these read RF and GDGS. Mg(2+) is bound at residue Asp104. Residue 126 to 128 coordinates substrate; it reads TID. The active-site Proton acceptor is the Asp128. Arg155 is a binding site for ADP. Substrate is bound by residues Arg163 and 170–172; that span reads MGR. Residues 186–188, Lys212, and 214–216 contribute to the ADP site; these read GCE and KKH. Substrate contacts are provided by residues Glu223, Arg244, and 250–253; that span reads HIQR.

The protein belongs to the phosphofructokinase type A (PFKA) family. ATP-dependent PFK group I subfamily. Prokaryotic clade 'B1' sub-subfamily. In terms of assembly, homotetramer. Mg(2+) serves as cofactor.

The protein resides in the cytoplasm. The enzyme catalyses beta-D-fructose 6-phosphate + ATP = beta-D-fructose 1,6-bisphosphate + ADP + H(+). It participates in carbohydrate degradation; glycolysis; D-glyceraldehyde 3-phosphate and glycerone phosphate from D-glucose: step 3/4. With respect to regulation, allosterically activated by ADP and other diphosphonucleosides, and allosterically inhibited by phosphoenolpyruvate. In terms of biological role, catalyzes the phosphorylation of D-fructose 6-phosphate to fructose 1,6-bisphosphate by ATP, the first committing step of glycolysis. This chain is ATP-dependent 6-phosphofructokinase, found in Salmonella agona (strain SL483).